We begin with the raw amino-acid sequence, 229 residues long: 7-cyano-7-deazaguanine synthase (229 aa).

7–17 (LSGGLDSTTVL) provides a ligand contact to ATP. Positions 191, 204, 207, and 210 each coordinate Zn(2+).

This sequence belongs to the QueC family. Zn(2+) is required as a cofactor.

The catalysed reaction is 7-carboxy-7-deazaguanine + NH4(+) + ATP = 7-cyano-7-deazaguanine + ADP + phosphate + H2O + H(+). It functions in the pathway purine metabolism; 7-cyano-7-deazaguanine biosynthesis. Its function is as follows. Catalyzes the ATP-dependent conversion of 7-carboxy-7-deazaguanine (CDG) to 7-cyano-7-deazaguanine (preQ(0)). In Cyanothece sp. (strain PCC 7425 / ATCC 29141), this protein is 7-cyano-7-deazaguanine synthase.